Consider the following 706-residue polypeptide: DNA ligase (706 aa).

NAD(+)-binding positions include 48–52 (DAAYD), 97–98 (SL), and E131. The active-site N6-AMP-lysine intermediate is the K133. R154, E191, K307, and K331 together coordinate NAD(+). Zn(2+)-binding residues include C425, C428, C443, and C449. The BRCT domain occupies 628–706 (RADSAVAGKT…EDEWLKLIEG (79 aa)).

Belongs to the NAD-dependent DNA ligase family. LigA subfamily. It depends on Mg(2+) as a cofactor. Mn(2+) serves as cofactor.

It carries out the reaction NAD(+) + (deoxyribonucleotide)n-3'-hydroxyl + 5'-phospho-(deoxyribonucleotide)m = (deoxyribonucleotide)n+m + AMP + beta-nicotinamide D-nucleotide.. DNA ligase that catalyzes the formation of phosphodiester linkages between 5'-phosphoryl and 3'-hydroxyl groups in double-stranded DNA using NAD as a coenzyme and as the energy source for the reaction. It is essential for DNA replication and repair of damaged DNA. This is DNA ligase from Afipia carboxidovorans (strain ATCC 49405 / DSM 1227 / KCTC 32145 / OM5) (Oligotropha carboxidovorans).